The primary structure comprises 214 residues: Outer-membrane lipoprotein LolB (214 aa).

Positions 1-25 (MNNLKRFTKSIFSCIALSGLLFLGG) are cleaved as a signal peptide. Cys26 carries N-palmitoyl cysteine lipidation. Residue Cys26 is the site of S-diacylglycerol cysteine attachment.

This sequence belongs to the LolB family. As to quaternary structure, monomer.

It localises to the cell outer membrane. Functionally, plays a critical role in the incorporation of lipoproteins in the outer membrane after they are released by the LolA protein. In Shewanella oneidensis (strain ATCC 700550 / JCM 31522 / CIP 106686 / LMG 19005 / NCIMB 14063 / MR-1), this protein is Outer-membrane lipoprotein LolB.